A 180-amino-acid polypeptide reads, in one-letter code: MKLLLRALATFVLLNGVDSVADESFQKCNVTGGPHGKEFDDSNATSRGLILRALRLCGVDFVDGIGVTIWDLSVEENAPFHGLDQNCRDVQLSPYEYITSVEFHSAKIDSETRVGFIRLLSQENKTYEIGKMSNRGKEGISECTAPEGYQLAGFYGRSEDKIFALGALWGPLPEKWPLQG.

The N-terminal stretch at Met1–Ser19 is a signal peptide. The region spanning Phe25–Pro171 is the Jacalin-type lectin domain. The short motif at Arg52–Asn77 is the RxLR-dEER element.

It belongs to the RxLR effector family.

The protein localises to the secreted. The protein resides in the host cytoplasm. It is found in the host nucleus. In terms of biological role, effector that partially suppresses the tobacco programmed cell death induced by cell death-inducing proteins. This is Secreted RxLR effector protein 19 from Plasmopara viticola (Downy mildew of grapevine).